We begin with the raw amino-acid sequence, 438 residues long: Cysteine--tRNA ligase (438 aa).

Cys28 is a Zn(2+) binding site. Residues 30–40 carry the 'HIGH' region motif; sequence PTVYNHLHLGN. The Zn(2+) site is built by Cys207, His232, and Glu236. The short motif at 264–268 is the 'KMSKS' region element; sequence KMSKS. Residue Lys267 participates in ATP binding.

This sequence belongs to the class-I aminoacyl-tRNA synthetase family. As to quaternary structure, monomer. It depends on Zn(2+) as a cofactor.

The protein resides in the cytoplasm. The catalysed reaction is tRNA(Cys) + L-cysteine + ATP = L-cysteinyl-tRNA(Cys) + AMP + diphosphate. In Onion yellows phytoplasma (strain OY-M), this protein is Cysteine--tRNA ligase.